A 284-amino-acid chain; its full sequence is Tropomyosin alpha-1 chain (284 aa).

M1 carries the post-translational modification N-acetylmethionine. The segment at 1 to 38 is disordered; it reads MDAIKKKMQMLKLDKENALDRAEQAEADKKAAEDRSKQ. Residues 1–284 adopt a coiled-coil conformation; it reads MDAIKKKMQM…DHALNDMTSI (284 aa). Over residues 12–38 the composition is skewed to basic and acidic residues; sequence KLDKENALDRAEQAEADKKAAEDRSKQ. S45 is subject to Phosphoserine. Residues 116–136 form a disordered region; sequence AEKAADESERGMKVIESRAQK. Phosphoserine is present on residues S174, S186, S206, and S252. Phosphotyrosine is present on Y261. 2 positions are modified to phosphoserine: S271 and S283.

Belongs to the tropomyosin family. As to quaternary structure, homodimer. Heterodimer of an alpha (TPM1, TPM3 or TPM4) and a beta (TPM2) chain. Interacts with HRG (via the HRR domain); the interaction contributes to the antiangiogenic properties of the histidine/proline-rich region (HRR) of HRG. Interacts (via N-terminus) with LMOD2 (via N-terminus) and TMOD1 (via N-terminus). Post-translationally, phosphorylated at Ser-283 by DAPK1 in response to oxidative stress and this phosphorylation enhances stress fiber formation in endothelial cells.

It localises to the cytoplasm. The protein resides in the cytoskeleton. Its function is as follows. Binds to actin filaments in muscle and non-muscle cells. Plays a central role, in association with the troponin complex, in the calcium dependent regulation of vertebrate striated muscle contraction. Smooth muscle contraction is regulated by interaction with caldesmon. In non-muscle cells is implicated in stabilizing cytoskeleton actin filaments. The sequence is that of Tropomyosin alpha-1 chain (Tpm1) from Mus musculus (Mouse).